The chain runs to 227 residues: NAD(P)H-quinone oxidoreductase subunit K, chloroplastic (227 aa).

Positions 43, 44, 108, and 139 each coordinate [4Fe-4S] cluster. Residues arginine 173 to tyrosine 192 are compositionally biased toward polar residues. Residues arginine 173–proline 201 are disordered.

Belongs to the complex I 20 kDa subunit family. NDH is composed of at least 16 different subunits, 5 of which are encoded in the nucleus. Requires [4Fe-4S] cluster as cofactor.

It localises to the plastid. Its subcellular location is the chloroplast thylakoid membrane. It catalyses the reaction a plastoquinone + NADH + (n+1) H(+)(in) = a plastoquinol + NAD(+) + n H(+)(out). The catalysed reaction is a plastoquinone + NADPH + (n+1) H(+)(in) = a plastoquinol + NADP(+) + n H(+)(out). Its function is as follows. NDH shuttles electrons from NAD(P)H:plastoquinone, via FMN and iron-sulfur (Fe-S) centers, to quinones in the photosynthetic chain and possibly in a chloroplast respiratory chain. The immediate electron acceptor for the enzyme in this species is believed to be plastoquinone. Couples the redox reaction to proton translocation, and thus conserves the redox energy in a proton gradient. The sequence is that of NAD(P)H-quinone oxidoreductase subunit K, chloroplastic from Trachelium caeruleum (Blue throatwort).